A 438-amino-acid polypeptide reads, in one-letter code: Ribosomal protein uS12 methylthiotransferase RimO (438 aa).

The MTTase N-terminal domain maps to 4 to 114 (PRVSFVSLGC…VMNAVHEVAP (111 aa)). 6 residues coordinate [4Fe-4S] cluster: Cys-13, Cys-49, Cys-78, Cys-146, Cys-150, and Cys-153. A Radical SAM core domain is found at 132-370 (LTPRHYAYLK…MAKQQQISTN (239 aa)). In terms of domain architecture, TRAM spans 373–438 (KKKVGKRLPV…DAYDLHGTAV (66 aa)).

This sequence belongs to the methylthiotransferase family. RimO subfamily. [4Fe-4S] cluster is required as a cofactor.

It is found in the cytoplasm. It carries out the reaction L-aspartate(89)-[ribosomal protein uS12]-hydrogen + (sulfur carrier)-SH + AH2 + 2 S-adenosyl-L-methionine = 3-methylsulfanyl-L-aspartate(89)-[ribosomal protein uS12]-hydrogen + (sulfur carrier)-H + 5'-deoxyadenosine + L-methionine + A + S-adenosyl-L-homocysteine + 2 H(+). Catalyzes the methylthiolation of an aspartic acid residue of ribosomal protein uS12. This is Ribosomal protein uS12 methylthiotransferase RimO from Brucella ovis (strain ATCC 25840 / 63/290 / NCTC 10512).